We begin with the raw amino-acid sequence, 281 residues long: Undecaprenyl-diphosphatase (281 aa).

8 helical membrane-spanning segments follow: residues 4–24 (IEILKSIFFGIVEGITEWLPI), 45–65 (AFMSMFNVVIQLGAILAVMVI), 89–109 (WLKVLIATLPLLGVFKFDDWF), 113–133 (FHNMVSVALMLIIYGVAFIYL), 152–172 (LPYTTAFYIGLFQVLALLPGT), 190–210 (SVVTEFTFYLGIPVMFGASAL), 225–245 (GQLFLLLVAMGVAFAVSMVAI), and 257–277 (FTLFGKYRIVLGSVLLLYSFV).

Belongs to the UppP family.

Its subcellular location is the cell membrane. The catalysed reaction is di-trans,octa-cis-undecaprenyl diphosphate + H2O = di-trans,octa-cis-undecaprenyl phosphate + phosphate + H(+). Its function is as follows. Catalyzes the dephosphorylation of undecaprenyl diphosphate (UPP). Confers resistance to bacitracin. The sequence is that of Undecaprenyl-diphosphatase from Streptococcus pneumoniae (strain Hungary19A-6).